The sequence spans 184 residues: Large ribosomal subunit protein uL6 (184 aa).

It belongs to the universal ribosomal protein uL6 family. As to quaternary structure, part of the 50S ribosomal subunit.

In terms of biological role, this protein binds to the 23S rRNA, and is important in its secondary structure. It is located near the subunit interface in the base of the L7/L12 stalk, and near the tRNA binding site of the peptidyltransferase center. This chain is Large ribosomal subunit protein uL6, found in Thermosipho melanesiensis (strain DSM 12029 / CIP 104789 / BI429).